The following is a 30-amino-acid chain: GIPCGESCVWIPCISSAIGCSCKSKVCYRN.

A cross-link (cyclopeptide (Gly-Asn)) is located at residues 1-30 (GIPCGESCVWIPCISSAIGCSCKSKVCYRN). Intrachain disulfides connect cysteine 4-cysteine 20, cysteine 8-cysteine 22, and cysteine 13-cysteine 27.

This is a cyclic peptide.

Functionally, probably participates in a plant defense mechanism. The protein is Cycloviolacin-O2 of Viola biflora (Yellow wood violet).